The sequence spans 380 residues: Glucose-1-phosphate adenylyltransferase (380 aa).

Residues G164, 179 to 180, and S190 each bind alpha-D-glucose 1-phosphate; that span reads EK.

This sequence belongs to the bacterial/plant glucose-1-phosphate adenylyltransferase family. Homotetramer.

The catalysed reaction is alpha-D-glucose 1-phosphate + ATP + H(+) = ADP-alpha-D-glucose + diphosphate. It functions in the pathway glycan biosynthesis; glycogen biosynthesis. In terms of biological role, involved in the biosynthesis of ADP-glucose, a building block required for the elongation reactions to produce glycogen. Catalyzes the reaction between ATP and alpha-D-glucose 1-phosphate (G1P) to produce pyrophosphate and ADP-Glc. This Ligilactobacillus salivarius (strain UCC118) (Lactobacillus salivarius) protein is Glucose-1-phosphate adenylyltransferase.